The following is a 291-amino-acid chain: 4-diphosphocytidyl-2-C-methyl-D-erythritol kinase (291 aa).

Residue Lys-11 is part of the active site. ATP is bound at residue 97–107 (PVAAGIGGGSS). Asp-139 is an active-site residue.

It belongs to the GHMP kinase family. IspE subfamily.

The catalysed reaction is 4-CDP-2-C-methyl-D-erythritol + ATP = 4-CDP-2-C-methyl-D-erythritol 2-phosphate + ADP + H(+). It functions in the pathway isoprenoid biosynthesis; isopentenyl diphosphate biosynthesis via DXP pathway; isopentenyl diphosphate from 1-deoxy-D-xylulose 5-phosphate: step 3/6. Its function is as follows. Catalyzes the phosphorylation of the position 2 hydroxy group of 4-diphosphocytidyl-2C-methyl-D-erythritol. This chain is 4-diphosphocytidyl-2-C-methyl-D-erythritol kinase, found in Methylorubrum extorquens (strain PA1) (Methylobacterium extorquens).